Reading from the N-terminus, the 453-residue chain is T-box transcription factor T homolog (453 aa).

The T-box DNA-binding region spans 47–217; that stretch reads LWRRFSKLTN…YNPFAKAFLD (171 aa). Positions 283–304 are disordered; that stretch reads RSHRSTPYPPPPYEQKYSPTSA.

Its subcellular location is the nucleus. Functionally, may be involved in the transcriptional regulation of genes required for gastrulation. This chain is T-box transcription factor T homolog, found in Patiria pectinifera (Starfish).